Here is a 201-residue protein sequence, read N- to C-terminus: Protein CIMAP1C (201 aa).

An STPGR repeat occupies 171-186; that stretch reads PAPTMSSRSGHTSPAR. Residues 172-201 form a disordered region; sequence APTMSSRSGHTSPARLLSPWASSTRPTYAR. The span at 191–201 shows a compositional bias: polar residues; the sequence is WASSTRPTYAR.

It belongs to the CIMAP family.

This is Protein CIMAP1C (CIMAP1C) from Bos taurus (Bovine).